We begin with the raw amino-acid sequence, 1169 residues long: MSPNNQNEYEIIDATPSTSVSNDSNRYPFANEPTNALQNMDYKDYLKMSAGNVSEYPGSPEVFLSEQDAVKAAIDIVGKLLTGLGVPFVGPIVSLYTQLIDILWPSKQKSQWEIFMEQVEELINQKIAEYARNKALSELEGLGNNYQLYLTALEEWKENPNGSRALRDVRNRFEILDSLFTQYMPSFRVTNFEVPFLTVYTMAANLHLLLLRDASIFGEEWGLSTSTINNYYNRQMKLTAEYSDHCVKWYETGLAKLKGSSAKQWIDYNQFRREMTLTVLDVVALFSNYDTRTYPLATTAQLTREVYTDPLGAVDVPNIGSWYDKAPSFSEIEKAAIRPPHVFDYITGLTVYTKKRSFTSDRYMRYWAGHQISYKHIGTSSTFTQMYGTNQNLQSTSNFDFTNYDIYKTLSNGAVLLDIVYPGYTYTFFGMPETEFFMVNQLNNTRKTLTYKPASKDIIDRTRDSELELPPETSGQPNYESYSHRLGHITFIYSSSTSTYVPVFSWTHRSADLTNTVKSGEITQIPGGKSSTIGRNTYIIKGRGYTGGDLVALTDRIGSCEFQMIFPESQRFRIRIRYASNETSYISLYGLNQSGTLKFNQTYSNKNENDLTYNDFKYIEYPRVISVNASSNIQRLSIGIQTNTNLFILDRIEFIPVDETYEAETDLEAAKKAVNALFTNTKDGLQPGVTDYEVNQAANLVECLSDDLYPNEKRLLFDAVREAKRLSEARNLLQDPDFQEINGENGWTASTGIEVIEGDAVFKGRYLRLPGAREIDTETYPTYLYQKVEEGVLKPYTRYRLRGFVGSSQGLEIYTIRHQTNRIVKNVPDDLLPDVPPVNNDGRINRCSEQKYVNSRLEVENRSGEAHEFSIPIDTGELDYNENAGIWVGFKITDPEGYATLGNLELVEEGPLSGDALERLQKEEQQWKIQMTRRREETDRRYMASKQAVDRLYADYQDQQLNPNVEITDLTAAQDLIQSIPYVYNEMFPEIPGMNYTKFTELTDRLQQAWGLYDQRNAIPNGDYRNELSNWNTTSGVNVQQINHTSVLVIPNWNEQVSQKFTVQPNQRYVLRVTARKEGVGNGYVSIRDGGNQSETLTFSASDYDTNGMYDTQASNTNGYNTNSVYMIKPAISRKTVDISSVYNQMWIEISETEGTFYIESVELIVDVE.

A disordered region spans residues 1 to 26; that stretch reads MSPNNQNEYEIIDATPSTSVSNDSNR. The span at 15–25 shows a compositional bias: polar residues; sequence TPSTSVSNDSN.

Belongs to the delta endotoxin family.

Functionally, promotes colloidosmotic lysis by binding to the midgut epithelial cells of insects. Active on various scarabaeid beetles. The polypeptide is Pesticidal crystal protein Cry8Ba (cry8Ba) (Bacillus thuringiensis serovar kumamotoensis).